Reading from the N-terminus, the 67-residue chain is Large ribosomal subunit protein uL29 (67 aa).

This sequence belongs to the universal ribosomal protein uL29 family.

This is Large ribosomal subunit protein uL29 from Wolbachia sp. subsp. Drosophila simulans (strain wRi).